Reading from the N-terminus, the 595-residue chain is DNA primase (595 aa).

A CHC2-type zinc finger spans residues 38 to 62 (CPFHQEKTPSFTVSDSKRFFYCFGC). One can recognise a Toprim domain in the interval 250 to 332 (NHSILVEGYF…EKKISFIRLP (83 aa)). Glu256, Asp300, and Asp302 together coordinate Mg(2+).

This sequence belongs to the DnaG primase family. In terms of assembly, monomer. Interacts with DnaB. The cofactor is Zn(2+). Mg(2+) serves as cofactor.

It carries out the reaction ssDNA + n NTP = ssDNA/pppN(pN)n-1 hybrid + (n-1) diphosphate.. Functionally, RNA polymerase that catalyzes the synthesis of short RNA molecules used as primers for DNA polymerase during DNA replication. This chain is DNA primase, found in Rickettsia felis (strain ATCC VR-1525 / URRWXCal2) (Rickettsia azadi).